Here is an 812-residue protein sequence, read N- to C-terminus: Valine--tRNA ligase (812 aa).

The 'HIGH' region motif lies at 47–57 (PTISGQLHIGH). Residues 536 to 540 (KMSKS) carry the 'KMSKS' region motif. ATP is bound at residue K539.

The protein belongs to the class-I aminoacyl-tRNA synthetase family. ValS type 2 subfamily. In terms of assembly, monomer.

The protein localises to the cytoplasm. It catalyses the reaction tRNA(Val) + L-valine + ATP = L-valyl-tRNA(Val) + AMP + diphosphate. Functionally, catalyzes the attachment of valine to tRNA(Val). As ValRS can inadvertently accommodate and process structurally similar amino acids such as threonine, to avoid such errors, it has a 'posttransfer' editing activity that hydrolyzes mischarged Thr-tRNA(Val) in a tRNA-dependent manner. In Ehrlichia ruminantium (strain Gardel), this protein is Valine--tRNA ligase.